A 343-amino-acid polypeptide reads, in one-letter code: Malate dehydrogenase, peroxisomal (343 aa).

NAD(+) contacts are provided by residues 8–14 (GASGGVG) and Asp-34. Substrate-binding residues include Arg-80 and Arg-86. NAD(+) is bound by residues Asn-93 and 116–118 (ISN). Residues Asn-118 and Arg-152 each coordinate substrate. His-187 serves as the catalytic Proton acceptor. Met-237 contacts NAD(+).

The protein belongs to the LDH/MDH superfamily. MDH type 1 family. In terms of assembly, homodimer.

The protein localises to the peroxisome. The enzyme catalyses (S)-malate + NAD(+) = oxaloacetate + NADH + H(+). The chain is Malate dehydrogenase, peroxisomal (MDH3) from Saccharomyces cerevisiae (strain ATCC 204508 / S288c) (Baker's yeast).